The sequence spans 740 residues: MPEQHPPITETTTGAASNGCPVVGHMKYPVEGGGNQDWWPNRLNLKVLHQNPAVADPMGAAFDYAAEVATIDVDALTRDIEEVMTTSQPWWPADYGHYGPLFIRMAWHAAGTYRIHDGRGGAGGGMQRFAPLNSWPDNASLDKARRLLWPVKKKYGKKLSWADLIVFAGNCALESMGFKTFGFGFGRVDQWEPDEVYWGKEATWLGDERYSGKRDLENPLAAVQMGLIYVNPEGPNGNPDPMAAAVDIRETFRRMAMNDVETAALIVGGHTFGKTHGAGPADLVGPEPEAAPLEQMGLGWKSSYGTGTGKDAITSGIEVVWTNTPTKWDNSFLEILYGYEWELTKSPAGAWQYTAKDGAGAGTIPDPFGGPGRSPTMLATDLSLRVDPIYERITRRWLEHPEELADEFAKAWYKLIHRDMGPVARYLGPLVPKQTLLWQDPVPAVSHDLVGEAEIASLKSQIRASGLTVSQLVSTAWAAASSFRGSDKRGGANGGRIRLQPQVGWEVNDPDGDLRKVIRTLEEIQESFNSAAPGNIKVSFADLVVLGGCAAIEKAAKAAGHNITVPFTPGRTDASQEQTDVESFAVLEPKADGFRNYLGKGNPLPAEYMLLDKANLLTLSAPEMTVLVGGLRVLGANYKRLPLGVFTEASESLTNDFFVNLLDMGITWEPSPADDGTYQGKDGSGKVKWTGSRVDLVFGSNSELRALVEVYGADDAQPKFVQDFVAAWDKVMNLDRFDVR.

A cross-link (tryptophyl-tyrosyl-methioninium (Trp-Tyr) (with M-255)) is located at residues 107–229 (WHAAGTYRIH…LAAVQMGLIY (123 aa)). Histidine 108 functions as the Proton acceptor in the catalytic mechanism. Positions 229–255 (YVNPEGPNGNPDPMAAAVDIRETFRRM) form a cross-link, tryptophyl-tyrosyl-methioninium (Tyr-Met) (with W-107). Histidine 270 contributes to the heme b binding site. Residue tryptophan 321 is the Tryptophan radical intermediate of the active site.

It belongs to the peroxidase family. Peroxidase/catalase subfamily. In terms of assembly, homodimer. The cofactor is heme b. In terms of processing, formation of the three residue Trp-Tyr-Met cross-link is important for the catalase, but not the peroxidase activity of the enzyme.

The enzyme catalyses H2O2 + AH2 = A + 2 H2O. It catalyses the reaction 2 H2O2 = O2 + 2 H2O. Functionally, bifunctional enzyme with both catalase and broad-spectrum peroxidase activity, oxidizing various electron donors including NADP(H). Protects M.tuberculosis against toxic reactive oxygen species (ROS) including hydrogen peroxide as well as organic peroxides and thus contributes to its survival within host macrophages by countering the phagocyte oxidative burst. Also displays efficient peroxynitritase activity, which may help the bacterium to persist in macrophages. Its function is as follows. Catalyzes the oxidative activation of the antitubercular pro-drug isoniazid (INH) to generate an isonicotinoyl radical that then reacts nonenzymatically with NAD to form an isonicotinoyl-NAD adduct which inhibits InhA. This is Catalase-peroxidase from Mycobacterium tuberculosis (strain CDC 1551 / Oshkosh).